The chain runs to 372 residues: MSTAALITLVRSGGNQVRRRVLLSSRLLQDDRRVTPTCHSSTSEPRCSRFDPDGSGSPATWDNFGIWDNRIDEPILLPPSIKYGKPIPKISLENVGCASQIGKRKENEDRFDFAQLTDEVLYFAVYDGHGGPAAADFCHTHMEKCIMDLLPKEKNLETLLTLAFLEIDKAFSSHARLSADATLLTSGTTATVALLRDGIELVVASVGDSRAILCRKGKPMKLTIDHTPERKDEKERIKKCGGFVAWNSLGQPHVNGRLAMTRSIGDLDLKTSGVIAEPETKRIKLHHADDSFLVLTTDGINFMVNSQEICDFVNQCHDPNEAAHAVTEQAIQYGTEDNSTAVVVPFGAWGKYKNSEINFSFSRSFASSGRWA.

The N-terminal 29 residues, 1–29 (MSTAALITLVRSGGNQVRRRVLLSSRLLQ), are a transit peptide targeting the mitochondrion. Residues 34 to 55 (VTPTCHSSTSEPRCSRFDPDGS) form a disordered region. Residues 46–61 (RCSRFDPDGSGSPATW) form a critical for association with the BCKDH complex region. A PPM-type phosphatase domain is found at 94 to 346 (NVGCASQIGK…DNSTAVVVPF (253 aa)). 2 residues coordinate Mn(2+): Asp-127 and Gly-128. A Phosphoserine modification is found at Ser-248. Residues Asp-298 and Asp-337 each contribute to the Mn(2+) site.

The protein belongs to the PP2C family. In terms of assembly, monomer. Interacts with E1 and E2 components of the branched-chain alpha-ketoacid dehydrogenase (BCKDH) complex; this interaction requires colocalization in mitochondria. Interacts with BCKDHA but not with BCKDHB of the E1 component. Interacts with the 24-meric E2 core composed of DBT monomers with a 24:1 stoichiometry; the N-terminal region (residues 49-61) of PPM1K and C-terminal linker of the lipoyl domain of DBT (residues 145-160) are critical for this interaction, whereas the lipoyl prosthetic group is dispensable. Competes with BCKDK for binding to the E2 core; this interaction is modulated by branched-chain alpha-keto acids. At steady state, BCKDH holoenzyme preferentially binds BCKDK and BCKDHA is phosphorylated. In response to high levels of branched-chain alpha-keto acids, the inhibitory BCKDK is replaced by activating PPM1K leading to BCKDHA dephosphorylation and BCAA degradation. The cofactor is Mn(2+).

It is found in the mitochondrion matrix. The catalysed reaction is O-phospho-L-seryl-[3-methyl-2-oxobutanoate dehydrogenase] + H2O = L-seryl-[3-methyl-2-oxobutanoate dehydrogenase] + phosphate. It catalyses the reaction O-phospho-L-seryl-[protein] + H2O = L-seryl-[protein] + phosphate. It participates in protein modification. With respect to regulation, up-regulated upon interaction with the 24-meric DBT/E2 core of the BCKDH complex. Inhibited by Mg(2+) and Ca(2+) ions likely by competing with Mn(2+) ions for binding to the same metal-binding sites. Functionally, serine/threonine-protein phosphatase component of macronutrients metabolism. Forms a functional kinase and phosphatase pair with BCKDK, serving as a metabolic regulatory node that coordinates branched-chain amino acids (BCAAs) with glucose and lipid metabolism via two distinct phosphoprotein targets: mitochondrial BCKDHA subunit of the branched-chain alpha-ketoacid dehydrogenase (BCKDH) complex and cytosolic ACLY, a lipogenic enzyme of Krebs cycle. At high levels of branched-chain ketoacids, dephosphorylates and activates mitochondrial BCKDH complex, a multisubunit complex consisting of three multimeric components each involved in different steps of BCAA catabolism: E1 composed of BCKDHA and BCKDHB, E2 core composed of DBT monomers, and E3 composed of DLD monomers. Tightly associates with the E2 component of BCKDH complex and dephosphorylates BCKDHA on Ser-337. Regulates the reversible phosphorylation of ACLY in response to changes in cellular carbohydrate abundance such as occurs during fasting to feeding metabolic transition. At fasting state, appears to dephosphorylate ACLY on Ser-455 and inactivate it. Refeeding stimulates MLXIPL/ChREBP transcription factor, leading to increased BCKDK to PPM1K expression ratio, phosphorylation and activation of ACLY that ultimately results in the generation of malonyl-CoA and oxaloacetate immediate substrates of de novo lipogenesis and gluconeogenesis, respectively. Recognizes phosphosites having SxS or RxxS motifs and strictly depends on Mn(2+) ions for the phosphatase activity. Regulates Ca(2+)-induced opening of mitochondrial transition pore and apoptotic cell death. The sequence is that of Protein phosphatase Mn(2+)-dependent 1K from Homo sapiens (Human).